The chain runs to 562 residues: Formate--tetrahydrofolate ligase (562 aa).

Residue 71–78 (TPAGEGKS) coordinates ATP.

This sequence belongs to the formate--tetrahydrofolate ligase family.

The enzyme catalyses (6S)-5,6,7,8-tetrahydrofolate + formate + ATP = (6R)-10-formyltetrahydrofolate + ADP + phosphate. The protein operates within one-carbon metabolism; tetrahydrofolate interconversion. The polypeptide is Formate--tetrahydrofolate ligase (Bacillus cereus (strain Q1)).